Consider the following 135-residue polypeptide: Putative large ribosomal subunit protein eL32' (135 aa).

It belongs to the eukaryotic ribosomal protein eL32 family.

The polypeptide is Putative large ribosomal subunit protein eL32' (Rpl32-ps) (Mus musculus (Mouse)).